The following is a 1202-amino-acid chain: MTVFIGIYKAIYNYEPQTPDELTIQEDDLLYLLEKSNVDDWWTVKKRVIGSDIDEPAGLVPSNYVEVADVISQVKAVYDYHEVQNPDEELVFNENDTFDVYDDKDPDWILARSISTNQFGFIPGNYVEPLNAETGSAVPPSQPAAAAALPPPIATSATSPPAPALTAIDISTLPPPPQHSSKTNAQASDSGNRDYADKDLPDLPPNKPSRSNTETNEDDYYDAPPTKPARPNSTSNEQDTRQKARSRTSYYDQHYEDDAEDYRSSQRDDDYNDSEPSGELRTWNVAEIEGRKKRKAKLSIGNNRLFFSPQKGSPQDWSVDKLISYDNEKKHLFLEFVDPYKSLELHTGDNDTCKEILSVIGEIKGASRDPGFKEVEMASKSKKKGNVLYDFTAESNDELTIKQGQVVYIINDQKSKDWWLCELIDSGKRGVVPSHFIEPIQEKLTSSHTGGLFKSIKKFAKGGKSSKASDDAYSGSWEDDGMEGSTERRSRSGSYSTRKRASSTTSKKELPNPKKSRIWEDRSGTFKVEAQFIGCKEGKVHLHKANGVKIAVAAEKLSDDDLVYVERVTGFSLDKYKVRGSGTSSSRQDPRESERERRRRLRENDEKDRDRRLRERELNELQKARQLLDNERTKLQEQNEQPPSKPPRPSSGMGNRSRSQSTKDNYDWFEFFLNSGVDVSSCQRYTSNFEKERITEDMMVDINDSILRTLGLREGDIVRVMKYLDKKLGRDVSPQTAVVAGGMFSEADGSLKNNNSENQSSVGQQLLPNNPDLVSNTPIDDDTWTVRPAAKSEATLAPKTAEFTGSMQDLLDLKPLEPKKTEQLPIANLAVTESVVPEPNLKNLEPVRTGNVVQKPLANTLTGGATLVPLDPFKTGGNNVLPVTTGFVMMPFATGGAMPIQRTGGIIVPQTTFGTNAAGGIMPAQITGGLIPVATTGGLMPQTSFGVTPVANVVPLQRTGGAVMPIATTGGANILPQTTFNLPPSGTVLPIQRTANGLMAANTTGGMMPLNTTGGMMPLNTTGGMIPLNTTGGMMPMNTTGGVMSLQRTGGMMPQTSFGTQQMTGGAMNMMPQISFGAQQMTGGAMNVFPQTSFGAQQMTGGAMQNPNMGTMQNPNMGVMQNPNMGAFQPKSQFGMTLQRTGGAMAQPIMDAGVTGIAQGVQNMSMAQPLQNQPTGFGFGNGPQQPVQANIYNASASNPFGF.

2 consecutive SH3 domains span residues 3–70 (VFIG…VADV) and 71–132 (ISQV…PLNA). The interval 133–278 (ETGSAVPPSQ…DDYNDSEPSG (146 aa)) is disordered. Positions 136-167 (SAVPPSQPAAAAALPPPIATSATSPPAPALTA) are enriched in low complexity. The segment covering 179-190 (HSSKTNAQASDS) has biased composition (polar residues). 2 stretches are compositionally biased toward basic and acidic residues: residues 191 to 201 (GNRDYADKDLP) and 253 to 269 (QHYE…QRDD). Positions 380–442 (KSKKKGNVLY…PSHFIEPIQE (63 aa)) constitute an SH3 3 domain. Disordered stretches follow at residues 462–518 (GGKS…KSRI), 577–609 (KVRG…EKDR), 622–661 (QKAR…RSQS), and 749–770 (GSLK…LPNN). Basic and acidic residues-rich tracts occupy residues 506–518 (SKKE…KSRI), 588–609 (QDPR…EKDR), and 622–637 (QKAR…KLQE). Composition is skewed to polar residues over residues 652–661 (GMGNRSRSQS) and 751–770 (LKNN…LPNN).

This sequence belongs to the SLA1 family. Component of the PAN1 actin cytoskeleton-regulatory complex.

The protein localises to the cell membrane. It localises to the endosome membrane. It is found in the cytoplasm. Its subcellular location is the cytoskeleton. The protein resides in the actin patch. Its function is as follows. Component of the PAN1 actin cytoskeleton-regulatory complex required for the internalization of endosomes during actin-coupled endocytosis. The complex links the site of endocytosis to the cell membrane-associated actin cytoskeleton. Mediates uptake of external molecules and vacuolar degradation of plasma membrane proteins. Plays a role in the proper organization of the cell membrane-associated actin cytoskeleton and promotes its destabilization. This chain is Actin cytoskeleton-regulatory complex protein SLA1 (SLA1), found in Vanderwaltozyma polyspora (strain ATCC 22028 / DSM 70294 / BCRC 21397 / CBS 2163 / NBRC 10782 / NRRL Y-8283 / UCD 57-17) (Kluyveromyces polysporus).